Consider the following 288-residue polypeptide: L-threonine kinase (288 aa).

80–90 (PIAKGMASSTA) is an ATP binding site.

This sequence belongs to the GHMP kinase family. PduX subfamily.

The protein resides in the cytoplasm. The enzyme catalyses L-threonine + ATP = O-phospho-L-threonine + ADP + H(+). It functions in the pathway cofactor biosynthesis; adenosylcobalamin biosynthesis. It participates in polyol metabolism; 1,2-propanediol degradation. Functionally, L-threonine kinase that catalyzes the conversion of L-threonine to L-threonine-O-3-phosphate. Involved in the de novo synthesis of adenosylcobalamin (coenzyme B12) and the assimilation of cobyric acid. Its function is as follows. Expression of a cosmid containing the full 21-gene pdu operon in E.coli allows E.coli to grow on 1,2-propanediol (1,2-PD) with the appearance of bacterial microcompartments (BMC) in its cytoplasm. In terms of biological role, the 1,2-PD-specific bacterial microcompartment (BMC) concentrates low levels of 1,2-PD catabolic enzymes, concentrates volatile reaction intermediates thus enhancing pathway flux and keeps the level of toxic, mutagenic propionaldehyde low. This gene probably benefits from its induction via the Pdu promoter, rather than a physical interaction with the BMC. The sequence is that of L-threonine kinase from Citrobacter freundii.